A 340-amino-acid polypeptide reads, in one-letter code: Thermopsin (340 aa).

An N-terminal signal peptide occupies residues 1-28; that stretch reads MNFKSICLIILLSALIIPYIPQNIYFFP. A propeptide spanning residues 29–41 is cleaved from the precursor; it reads HRNTTGATISSGL. Asparagine 31, asparagine 65, asparagine 85, asparagine 117, asparagine 148, asparagine 197, asparagine 277, asparagine 287, asparagine 327, and asparagine 334 each carry an N-linked (GlcNAc...) asparagine glycan.

The protein belongs to the peptidase A5 family.

The protein resides in the secreted. It catalyses the reaction Specificity similar to pepsin A, prefers bulky hydrophobic side-chains on either side of the scissible bond.. Functionally, may represent a new class of acid proteases. It digests proteins and peptides in acidic solution. The protein is Thermopsin (thpS) of Sulfolobus acidocaldarius (strain ATCC 33909 / DSM 639 / JCM 8929 / NBRC 15157 / NCIMB 11770).